A 238-amino-acid chain; its full sequence is MIAFIVLLSLAAVLQQSSGTVDFASESSNKKNYQKEIVDKHNALRRSVKPTARNMLQMKWNSHAAQNAKRWADRCTFAHSPPNTRTVGKLRCGENIFMSSQPFPWSGVVQAWYDEIKNFVYGIGAKPPGSVIGHYTQVVWYKSHLIGCASAKCSSSKYLYVCQYCPAGNIRGSIATPYKSGPPCADCPSACVNRLCTNPCNYNNDFSNCKSLAKKSKCQTEWIKKKCPASCFCHNKII.

The signal sequence occupies residues 1 to 19 (MIAFIVLLSLAAVLQQSSG). Positions 20 to 28 (TVDFASESS) are excised as a propeptide. One can recognise an SCP domain in the interval 38–164 (VDKHNALRRS…SSKYLYVCQY (127 aa)). Residues Thr51 and Ser106 each contribute to the Zn(2+) site. 8 disulfide bridges follow: Cys75-Cys153, Cys92-Cys165, Cys148-Cys162, Cys184-Cys191, Cys187-Cys196, Cys200-Cys233, Cys209-Cys227, and Cys218-Cys231. The ShKT domain maps to 200–233 (CNYNNDFSNCKSLAKKSKCQTEWIKKKCPASCFC).

In terms of tissue distribution, expressed by the venom gland.

It is found in the secreted. Functionally, blocks olfactory (CNGA2) and retinal (CNGA1) CNG channel currents. Is really less potent that Pseudechetoxin. Does not affect neither depolarization- nor caffeine-induced contraction of smooth muscle. In Pseudechis porphyriacus (Red-bellied black snake), this protein is Cysteine-rich venom protein pseudecin.